We begin with the raw amino-acid sequence, 998 residues long: Calcium-transporting ATPase 3, endoplasmic reticulum-type (998 aa).

Residues 1-48 (MEDAYARSVSEVLDFFGVDPTKGLSDSQVVHHSRLYGRNVLPEEKRTP) are Cytoplasmic-facing. The helical transmembrane segment at 49-69 (FWKLVLKQFDDLLVKILIVAA) threads the bilayer. Residues 70–89 (IVSFVLALANGETGLTAFLE) are Lumenal-facing. A helical transmembrane segment spans residues 90–109 (PFVILLILAANAAVGVITET). Residues 110 to 250 (NAEKALEELR…DEATPLKKKL (141 aa)) are Cytoplasmic-facing. A helical membrane pass occupies residues 251 to 270 (DEFGSFLAKVIAGICVLVWV). Residues 271–291 (VNIGHFSDPSHGGFFKGAIHY) lie on the Lumenal side of the membrane. The helical transmembrane segment at 292–309 (FKIAVALAVAAIPEGLPA) threads the bilayer. Ca(2+) contacts are provided by V300, A301, I303, and E305. Over 310–746 (VVTTCLALGT…AEGRAIYNNT (437 aa)) the chain is Cytoplasmic. D347 acts as the 4-aspartylphosphate intermediate in catalysis. Mg(2+) contacts are provided by D692 and D696. A helical transmembrane segment spans residues 747-766 (KQFIRYMISSNIGEVVCIFV). Positions 757 and 760 each coordinate Ca(2+). Over 767 to 776 (AAVLGIPDTL) the chain is Lumenal. A helical transmembrane segment spans residues 777 to 797 (APVQLLWVNLVTDGLPATAIG). 3 residues coordinate Ca(2+): N785, T788, and D789. Topologically, residues 798–817 (FNKQDSDVMKAKPRKVGEAV) are cytoplasmic. Residues 818 to 840 (VTGWLFFRYLVIGVYVGLATVAG) form a helical membrane-spanning segment. At 841–883 (FIWWFVYSDGGPKLTYSELMNFETCALRETTYPCSIFEDRHPS) the chain is on the lumenal side. The helical transmembrane segment at 884-903 (TVAMTVLVVVEMFNALNNLS) threads the bilayer. E894 contributes to the Ca(2+) binding site. The Cytoplasmic portion of the chain corresponds to 904–916 (ENQSLLVITPRSN). A helical transmembrane segment spans residues 917–935 (LWLVGSIILTMLLHVLILY). The Lumenal segment spans residues 936-950 (VHPLAVLFSVTPLSW). Residues 951-971 (AEWTAVLYLSFPVIIIDELLK) form a helical membrane-spanning segment. The Cytoplasmic segment spans residues 972–998 (FLSRNTGMRFRFRLRKADLLPKDRRDK).

The protein belongs to the cation transport ATPase (P-type) (TC 3.A.3) family. Type IIA subfamily. In terms of tissue distribution, expressed in root cap, in elongation and differentiation zones of roots, in vascular tissues of roots, leaves, floral pedicels and style, in leaves, including hydathodes and guard cells, in stamens, in petals, in sepals and in siliques.

It is found in the golgi apparatus membrane. It localises to the endosome membrane. The protein localises to the prevacuolar compartment membrane. It carries out the reaction Ca(2+)(in) + ATP + H2O = Ca(2+)(out) + ADP + phosphate + H(+). Its function is as follows. This magnesium-dependent enzyme catalyzes the hydrolysis of ATP coupled with the translocation of calcium from the cytosol to an endomembrane compartment. Involved in calcium-enhanced root growth, in tolerance to toxic levels of manganese and in secretory processes. Has a crucial role in manganese nutrition, but is not involved in transporting copper, iron or zinc. This Arabidopsis thaliana (Mouse-ear cress) protein is Calcium-transporting ATPase 3, endoplasmic reticulum-type.